Here is a 321-residue protein sequence, read N- to C-terminus: Hex-5-enoyl-[acyl-carrier protein] acetylenase (321 aa).

Transmembrane regions (helical) follow at residues 36 to 56 (FLLYNVIPTIGTITAIALLWW) and 62 to 82 (VEIGLLIGMWALSMIGMSVGL). The Histidine box-1 signature appears at 83–88 (HRYFAH). A helical transmembrane segment spans residues 99–119 (VILAILGCMGAQGPVVSWVAV). Residues 120 to 124 (HRRHH) carry the Histidine box-2 motif. Residues 188–208 (YVVWIVLGLLIPTILGGIIHG) traverse the membrane as a helical segment. A Histidine box-3 motif is present at residues 269–273 (QNNHH).

Belongs to the fatty acid desaturase type 2 family. The cofactor is Fe(2+).

Its subcellular location is the membrane. It carries out the reaction 5-hexenoyl-[ACP] + 2 reduced [2Fe-2S]-[ferredoxin] + O2 + 2 H(+) = 5-hexynoyl-[ACP] + 2 oxidized [2Fe-2S]-[ferredoxin] + 2 H2O. The enzyme catalyses hexanoyl-[ACP] + 2 reduced [2Fe-2S]-[ferredoxin] + O2 + 2 H(+) = 5-hexenoyl-[ACP] + 2 oxidized [2Fe-2S]-[ferredoxin] + 2 H2O. Functionally, desaturase involved in the biosynthesis of jamaicamides, which show sodium channel blocking activity and fish toxicity. Catalyzes the conversion of 5-hexenoyl loaded onto the acyl carrier protein JamC (5-hexenoyl-JamC) to 5-hexynoyl-JamC. Can also catalyze the conversion of hexanoyl-JamC to 5-hexenoyl-JamC, but it cannot use free 5-hexenoic acid, 5-hexenoyl-CoA, 2-hexenoyl-JamC, 3-hexenoyl-JamC or 4-hexenoyl-JamC. Is specific for C(6) chains, and cannot use 4-pentenoyl-JamC, 6-heptenoyl-JamC or 7-octenoyl-JamC as substrate. This is Hex-5-enoyl-[acyl-carrier protein] acetylenase from Moorena producens (strain JHB).